Consider the following 195-residue polypeptide: ATP-dependent Clp protease proteolytic subunit (195 aa).

S94 acts as the Nucleophile in catalysis. Residue H119 is part of the active site.

The protein belongs to the peptidase S14 family. As to quaternary structure, component of the chloroplastic Clp protease core complex.

Its subcellular location is the plastid. It is found in the chloroplast stroma. It carries out the reaction Hydrolysis of proteins to small peptides in the presence of ATP and magnesium. alpha-casein is the usual test substrate. In the absence of ATP, only oligopeptides shorter than five residues are hydrolyzed (such as succinyl-Leu-Tyr-|-NHMec, and Leu-Tyr-Leu-|-Tyr-Trp, in which cleavage of the -Tyr-|-Leu- and -Tyr-|-Trp bonds also occurs).. Its function is as follows. Cleaves peptides in various proteins in a process that requires ATP hydrolysis. Has a chymotrypsin-like activity. Plays a major role in the degradation of misfolded proteins. The protein is ATP-dependent Clp protease proteolytic subunit of Cycas taitungensis (Prince sago).